A 648-amino-acid polypeptide reads, in one-letter code: Leucine aminopeptidase 2 (648 aa).

Residues 143–145 and 269–274 contribute to the a peptide site; these read QCQ and PYGGME. His-298 lines the Zn(2+) pocket. The active-site Proton acceptor is the Glu-299. The Zn(2+) site is built by His-302 and Glu-321. The active-site Proton donor is the Tyr-408.

It belongs to the peptidase M1 family. Zn(2+) serves as cofactor.

It localises to the cytoplasm. The protein resides in the nucleus. It carries out the reaction an epoxide + H2O = an ethanediol. Functionally, aminopeptidase that preferentially cleaves di- and tripeptides. Also has low epoxide hydrolase activity (in vitro). Can hydrolyze the epoxide leukotriene LTA(4) but it forms preferentially 5,6-dihydroxy-7,9,11,14-eicosatetraenoic acid rather than the cytokine leukotriene B(4) as the product compared to the homologous mammalian enzyme (in vitro). This chain is Leucine aminopeptidase 2, found in Lodderomyces elongisporus (strain ATCC 11503 / CBS 2605 / JCM 1781 / NBRC 1676 / NRRL YB-4239) (Yeast).